The sequence spans 229 residues: Enolase-phosphatase E1 (229 aa).

The disordered stretch occupies residues 207-229 (RDPASHHPQVQRFDDIHPEQIPA). A compositionally biased stretch (basic and acidic residues) spans 218-229 (RFDDIHPEQIPA).

It belongs to the HAD-like hydrolase superfamily. MasA/MtnC family. As to quaternary structure, monomer. Mg(2+) is required as a cofactor.

It carries out the reaction 5-methylsulfanyl-2,3-dioxopentyl phosphate + H2O = 1,2-dihydroxy-5-(methylsulfanyl)pent-1-en-3-one + phosphate. It functions in the pathway amino-acid biosynthesis; L-methionine biosynthesis via salvage pathway; L-methionine from S-methyl-5-thio-alpha-D-ribose 1-phosphate: step 3/6. The protein operates within amino-acid biosynthesis; L-methionine biosynthesis via salvage pathway; L-methionine from S-methyl-5-thio-alpha-D-ribose 1-phosphate: step 4/6. In terms of biological role, bifunctional enzyme that catalyzes the enolization of 2,3-diketo-5-methylthiopentyl-1-phosphate (DK-MTP-1-P) into the intermediate 2-hydroxy-3-keto-5-methylthiopentenyl-1-phosphate (HK-MTPenyl-1-P), which is then dephosphorylated to form the acireductone 1,2-dihydroxy-3-keto-5-methylthiopentene (DHK-MTPene). This chain is Enolase-phosphatase E1, found in Klebsiella pneumoniae (strain 342).